We begin with the raw amino-acid sequence, 84 residues long: Cytochrome b559 subunit alpha (84 aa).

The helical transmembrane segment at 22–36 threads the bilayer; sequence VIHSITIPSLFVAGW. Residue histidine 24 participates in heme binding.

This sequence belongs to the PsbE/PsbF family. In terms of assembly, heterodimer of an alpha subunit and a beta subunit. PSII is composed of 1 copy each of membrane proteins PsbA, PsbB, PsbC, PsbD, PsbE, PsbF, PsbH, PsbI, PsbJ, PsbK, PsbL, PsbM, PsbT, PsbX, PsbY, PsbZ, Psb30/Ycf12, at least 3 peripheral proteins of the oxygen-evolving complex and a large number of cofactors. It forms dimeric complexes. Heme b is required as a cofactor.

Its subcellular location is the plastid. It localises to the chloroplast thylakoid membrane. Functionally, this b-type cytochrome is tightly associated with the reaction center of photosystem II (PSII). PSII is a light-driven water:plastoquinone oxidoreductase that uses light energy to abstract electrons from H(2)O, generating O(2) and a proton gradient subsequently used for ATP formation. It consists of a core antenna complex that captures photons, and an electron transfer chain that converts photonic excitation into a charge separation. In Gracilaria tenuistipitata var. liui (Red alga), this protein is Cytochrome b559 subunit alpha.